Here is a 353-residue protein sequence, read N- to C-terminus: Photosystem II D2 protein (353 aa).

Position 2 is an N-acetylthreonine (Thr2). The residue at position 2 (Thr2) is a Phosphothreonine. Residues 41-61 (CAYFALGGWFTGTTFVTSWYT) form a helical membrane-spanning segment. His118 is a binding site for chlorophyll a. A helical membrane pass occupies residues 125–141 (GFMLRQFELARSVQLRP). 2 residues coordinate pheophytin a: Gln130 and Asn143. Residues 153–166 (VFVSVFFIYPLGQS) form a helical membrane-spanning segment. Residue His198 participates in chlorophyll a binding. A helical transmembrane segment spans residues 208–228 (AALLCAIHGATVENTLFEDGD). 2 residues coordinate a plastoquinone: His215 and Phe262. His215 provides a ligand contact to Fe cation. His269 contributes to the Fe cation binding site. Residues 279-295 (GLWMSALGVVGLALNLR) form a helical membrane-spanning segment.

The protein belongs to the reaction center PufL/M/PsbA/D family. PSII is composed of 1 copy each of membrane proteins PsbA, PsbB, PsbC, PsbD, PsbE, PsbF, PsbH, PsbI, PsbJ, PsbK, PsbL, PsbM, PsbT, PsbX, PsbY, PsbZ, Psb30/Ycf12, at least 3 peripheral proteins of the oxygen-evolving complex and a large number of cofactors. It forms dimeric complexes. The cofactor is The D1/D2 heterodimer binds P680, chlorophylls that are the primary electron donor of PSII, and subsequent electron acceptors. It shares a non-heme iron and each subunit binds pheophytin, quinone, additional chlorophylls, carotenoids and lipids. There is also a Cl(-1) ion associated with D1 and D2, which is required for oxygen evolution. The PSII complex binds additional chlorophylls, carotenoids and specific lipids..

The protein localises to the plastid membrane. It carries out the reaction 2 a plastoquinone + 4 hnu + 2 H2O = 2 a plastoquinol + O2. In terms of biological role, photosystem II (PSII) is a light-driven water:plastoquinone oxidoreductase that uses light energy to abstract electrons from H(2)O, generating O(2) and a proton gradient subsequently used for ATP formation. It consists of a core antenna complex that captures photons, and an electron transfer chain that converts photonic excitation into a charge separation. The D1/D2 (PsbA/PsbD) reaction center heterodimer binds P680, the primary electron donor of PSII as well as several subsequent electron acceptors. D2 is needed for assembly of a stable PSII complex. The protein is Photosystem II D2 protein of Cuscuta exaltata (Tall dodder).